The sequence spans 602 residues: Elongation factor 4 (602 aa).

The tr-type G domain occupies 5–187; that stretch reads DHIRNFAIIA…QIIVSLPAPE (183 aa). GTP contacts are provided by residues 17–22 and 134–137; these read DHGKST and NKVD.

It belongs to the TRAFAC class translation factor GTPase superfamily. Classic translation factor GTPase family. LepA subfamily.

Its subcellular location is the cell inner membrane. It catalyses the reaction GTP + H2O = GDP + phosphate + H(+). In terms of biological role, required for accurate and efficient protein synthesis under certain stress conditions. May act as a fidelity factor of the translation reaction, by catalyzing a one-codon backward translocation of tRNAs on improperly translocated ribosomes. Back-translocation proceeds from a post-translocation (POST) complex to a pre-translocation (PRE) complex, thus giving elongation factor G a second chance to translocate the tRNAs correctly. Binds to ribosomes in a GTP-dependent manner. The polypeptide is Elongation factor 4 (Pelagibacter ubique (strain HTCC1062)).